The chain runs to 278 residues: Tryptophan synthase alpha chain (278 aa).

Residues Glu-49 and Asp-60 each act as proton acceptor in the active site.

It belongs to the TrpA family. As to quaternary structure, tetramer of two alpha and two beta chains.

It carries out the reaction (1S,2R)-1-C-(indol-3-yl)glycerol 3-phosphate + L-serine = D-glyceraldehyde 3-phosphate + L-tryptophan + H2O. The protein operates within amino-acid biosynthesis; L-tryptophan biosynthesis; L-tryptophan from chorismate: step 5/5. The alpha subunit is responsible for the aldol cleavage of indoleglycerol phosphate to indole and glyceraldehyde 3-phosphate. This Corynebacterium diphtheriae (strain ATCC 700971 / NCTC 13129 / Biotype gravis) protein is Tryptophan synthase alpha chain.